The following is a 356-amino-acid chain: Cysteine protease XCP2 (356 aa).

Positions 1–26 (MALSSPSRILCFALALSAASLSLSFA) are cleaved as a signal peptide. Residues 27–137 (SSHDYSIVGY…AEFAYRDVEA (111 aa)) constitute a propeptide, activation peptide. 3 cysteine pairs are disulfide-bonded: Cys159–Cys201, Cys193–Cys234, and Cys292–Cys343. Cys162 is a catalytic residue. N-linked (GlcNAc...) asparagine glycosylation occurs at Asn181. Residues His298 and Asn318 contribute to the active site.

Belongs to the peptidase C1 family. Interacts with PRN2. In terms of tissue distribution, mostly expressed in roots, stems and flowers. Confined to tracheary elements, and specifically to xylem.

Its subcellular location is the vacuole. The protein resides in the cell membrane. In terms of biological role, cysteine protease involved in xylem tracheary element (TE) autolysis during xylogenesis in roots. Participates in micro autolysis within the intact central vacuole before mega autolysis is initiated by tonoplast implosion. Involved in susceptibility to the bacterial plant pathogen Ralstonia solanacearum. The polypeptide is Cysteine protease XCP2 (Arabidopsis thaliana (Mouse-ear cress)).